The sequence spans 261 residues: CD40 ligand (261 aa).

At 1-22 (MIETYNQPSPRSAATGLPVRMK) the chain is on the cytoplasmic side. The chain crosses the membrane as a helical; Signal-anchor for type II membrane protein span at residues 23-43 (IFMYLLTIFLITQMIGSALFA). At 44 to 261 (VYLHRRLDKI…GFTSFGLLKL (218 aa)) the chain is on the extracellular side. A THD domain is found at 122–261 (IAAHVISEAS…GFTSFGLLKL (140 aa)). Residues Cys-178 and Cys-218 are joined by a disulfide bond. Residue Asn-240 is glycosylated (N-linked (GlcNAc...) asparagine).

It belongs to the tumor necrosis factor family. In terms of assembly, homotrimer. Interacts with CD28. CD40 ligand, soluble form: Exists as either a monomer or a homotrimer. Forms a ternary complex between CD40 and integrins for CD40-CD40LG signaling. In terms of processing, the soluble form derives from the membrane form by proteolytic processing.

It is found in the cell membrane. Its subcellular location is the cell surface. The protein localises to the secreted. Its function is as follows. Cytokine that acts as a ligand to CD40/TNFRSF5. Costimulates T-cell proliferation and cytokine production. Its cross-linking on T-cells generates a costimulatory signal which enhances the production of IL4 and IL10 in conjunction with the TCR/CD3 ligation and CD28 costimulation. Induces the activation of NF-kappa-B. Induces the activation of kinases MAPK8 and PAK2 in T-cells. Mediates B-cell proliferation in the absence of co-stimulus as well as IgE production in the presence of IL4. Involved in immunoglobulin class switching. Acts as a ligand for integrins, specifically ITGA5:ITGB1 and ITGAV:ITGB3; both integrins and the CD40 receptor are required for activation of CD40-CD40LG signaling, which have cell-type dependent effects, such as B-cell activation, NF-kappa-B signaling and anti-apoptotic signaling. The protein is CD40 ligand (CD40LG) of Cercocebus atys (Sooty mangabey).